Here is an 854-residue protein sequence, read N- to C-terminus: DNA mismatch repair protein MutS (854 aa).

615 to 622 (GPNMGGKS) serves as a coordination point for ATP.

Belongs to the DNA mismatch repair MutS family.

Its function is as follows. This protein is involved in the repair of mismatches in DNA. It is possible that it carries out the mismatch recognition step. This protein has a weak ATPase activity. In Aliivibrio fischeri (strain MJ11) (Vibrio fischeri), this protein is DNA mismatch repair protein MutS.